The sequence spans 372 residues: MPSDRDHDAGIFAFFGAVPRSDRCRQTRGGGEVVDGSSVFGHVPVFAQRCVTLLAPALTRHHADGSNAILVDATLGVGGHAERFLTEFPGLRLIGLDRDPSALDIARTRLMRFADRVTLIHTRYDNLAVALNKFGYAAVESVDGVLFDLGVSSMQLDCAERGFSYAQDVPLDMRMDPWSPVSAADIVNNYDEAALADILRRYGEERFARRIAAHIVRRRAHTPFTSTAELVALLYQAIPAPARRIGGHPAKRTFQALRIAVNDELNSLSNVLPAALDALTVAGRLVVLAYQSLEDRIVKRVFADAVSSRTPAGLPIELPGHGPRFRLLTRGAEHADAAEIECNPRSAAVRLRALQRTQHGVEPQQPTRRGDS.

S-adenosyl-L-methionine-binding positions include 78-80 (GGH), D97, Y124, D148, and Q155.

The protein belongs to the methyltransferase superfamily. RsmH family.

Its subcellular location is the cytoplasm. It catalyses the reaction cytidine(1402) in 16S rRNA + S-adenosyl-L-methionine = N(4)-methylcytidine(1402) in 16S rRNA + S-adenosyl-L-homocysteine + H(+). Specifically methylates the N4 position of cytidine in position 1402 (C1402) of 16S rRNA. The protein is Ribosomal RNA small subunit methyltransferase H of Mycobacterium leprae (strain Br4923).